The sequence spans 146 residues: MLPLSLLKTAQGHPMLVELKNGETYNGHLVNCDTWMNIHLREVICTSKDGDRFWRMPECYVRGNTIKYLRVPDEVIDKVQEEAKSRTDRKPPGVGRARARGGRDDSAVGRQPKGIGRGMDDGGAKGRGKGGPSAKSGGRGGGRGRG.

The Sm domain maps to 2–75 (LPLSLLKTAQ…IKYLRVPDEV (74 aa)). The segment covering 80–91 (QEEAKSRTDRKP) has biased composition (basic and acidic residues). Positions 80–146 (QEEAKSRTDR…GGRGGGRGRG (67 aa)) are disordered. The span at 137-146 (GGRGGGRGRG) shows a compositional bias: gly residues.

It belongs to the snRNP Sm proteins family. LSm subunits form a heteromer with a doughnut shape.

It localises to the nucleus. Its function is as follows. Binds specifically to the 3'-terminal U-tract of U6 snRNA. In Nicotiana tabacum (Common tobacco), this protein is Probable U6 snRNA-associated Sm-like protein LSm4.